Reading from the N-terminus, the 878-residue chain is MNEQYSAMRSNVSMLGTLLGDTIKEALGEHILDRVETIRKLSKSSRAGNEASRQELLTTLQNLSNDELLPVARAFSQFLNLTNTAEQYHSISPHGEAASNPEALAQLFTRLKDKKLSDQDMRSAVDDLSIELVLTAHPTEITRRTLIHKLVEVNTCLSQLDHNDLADYERNKIMRRLRQLVAQSWHTDEIRKLRPSPVDEAKWGFAVVENSLWEGVPAFLREFNEQLENSLDYRLPVEAVPIRFTSWMGGDRDGNPNVTAEITRHVLLLSRWKATDLFLRDIQVLVSELSMSECTPELRELAGGEEVLEPYRQLMKNVRTQLTNTQAYLEARLKGERVLPPHDLLVSNDQLWEPLYACYQSLKACGMEIIANGQLLDTLRRVRCFGVPLVRIDVRQESTRHTDAIAELTRYLGLGDYESWSESDKQAFLVRELNSKRPLVPLKWEPSAETQEVLETCRVIAEAPQGSIAAYVISMAKVPSDVLAVHLLLKEAGCPFTLPVAPLFETLDDLNNADDVMTQLLGIDWYRGLIQGKQMVMIGYSDSAKDAGVMAASWAQYRAQDALIKTCEKAGITLTLFHGRGGSIGRGGAPAHAALLSQPPGSLKGGLRVTEQGEMIRFKFGLPEVTISSLALYAGAILEANLLPPPEPKKEWIEVMDLLSDASCDMYRSYVRENPEFVRYFRAATPELELGKLPLGSRPAKRRPDGGVESLRAIPWIFAWTQNRLMLPAWLGAGAGLQRAIDAGKQDVLATMCRDWPFFSTRIGMLEMVFAKADLWLAEYYDQRLVDKSLWPLGQQLRDQLAADIKVVLAIANDDHLMADLPWIAESIALRNVYTDPLNVLQAELLHRSRQQEHPDACVEQALMVTIAGVAAGMRNTG.

Residues His137 and Lys545 contribute to the active site.

Belongs to the PEPCase type 1 family. Mg(2+) serves as cofactor.

It carries out the reaction oxaloacetate + phosphate = phosphoenolpyruvate + hydrogencarbonate. Forms oxaloacetate, a four-carbon dicarboxylic acid source for the tricarboxylic acid cycle. The polypeptide is Phosphoenolpyruvate carboxylase (Yersinia pestis bv. Antiqua (strain Antiqua)).